The sequence spans 121 residues: Flagellar protein FliT (121 aa).

Residues 1–50 (MNNAPHLYFAWQQLVEKSQLMLRLATEEQWDELIASEMAYVNAVQEIAHL) form a required for homodimerization region. The tract at residues 60–98 (MQEQLRPMLHLILDNESKVKQLLQIRMDELAKLVGQSSV) is fliD binding.

The protein belongs to the FliT family. Homodimer. Interacts with FliD and FlhC.

Its subcellular location is the cytoplasm. It localises to the cytosol. In terms of biological role, dual-function protein that regulates the transcription of class 2 flagellar operons and that also acts as an export chaperone for the filament-capping protein FliD. As a transcriptional regulator, acts as an anti-FlhDC factor; it directly binds FlhC, thus inhibiting the binding of the FlhC/FlhD complex to class 2 promoters, resulting in decreased expression of class 2 flagellar operons. As a chaperone, effects FliD transition to the membrane by preventing its premature polymerization, and by directing it to the export apparatus. This chain is Flagellar protein FliT, found in Shigella flexneri serotype 5b (strain 8401).